A 192-amino-acid chain; its full sequence is Probable GTP-binding protein EngB (192 aa).

Residues Asn22–Ala192 enclose the EngB-type G domain. GTP-binding positions include Gly30–Ser37, Gly57–Gly61, Asp75–Gly78, Thr142–Asp145, and Phe173–Ala175. Ser37 and Thr59 together coordinate Mg(2+).

It belongs to the TRAFAC class TrmE-Era-EngA-EngB-Septin-like GTPase superfamily. EngB GTPase family. The cofactor is Mg(2+).

Necessary for normal cell division and for the maintenance of normal septation. This chain is Probable GTP-binding protein EngB, found in Thermoanaerobacter pseudethanolicus (strain ATCC 33223 / 39E) (Clostridium thermohydrosulfuricum).